Reading from the N-terminus, the 380-residue chain is Anhydro-N-acetylmuramic acid kinase (380 aa).

9 to 16 (GTSVDGID) lines the ATP pocket.

This sequence belongs to the anhydro-N-acetylmuramic acid kinase family.

The catalysed reaction is 1,6-anhydro-N-acetyl-beta-muramate + ATP + H2O = N-acetyl-D-muramate 6-phosphate + ADP + H(+). The protein operates within amino-sugar metabolism; 1,6-anhydro-N-acetylmuramate degradation. Its pathway is cell wall biogenesis; peptidoglycan recycling. Catalyzes the specific phosphorylation of 1,6-anhydro-N-acetylmuramic acid (anhMurNAc) with the simultaneous cleavage of the 1,6-anhydro ring, generating MurNAc-6-P. Is required for the utilization of anhMurNAc either imported from the medium or derived from its own cell wall murein, and thus plays a role in cell wall recycling. This is Anhydro-N-acetylmuramic acid kinase from Cyanothece sp. (strain PCC 7425 / ATCC 29141).